A 178-amino-acid chain; its full sequence is UPF0232 protein cgR_0005 (178 aa).

A disordered region spans residues 16 to 55; it reads AMRRNGSVPDLNKNDAFRRPPAPKGGVEKRKKGRASGLDG.

The protein belongs to the UPF0232 family.

The sequence is that of UPF0232 protein cgR_0005 from Corynebacterium glutamicum (strain R).